A 277-amino-acid polypeptide reads, in one-letter code: Thymidylate synthase (277 aa).

Residue R21 participates in dUMP binding. H51 provides a ligand contact to (6R)-5,10-methylene-5,6,7,8-tetrahydrofolate. R126 to R127 serves as a coordination point for dUMP. Catalysis depends on C159, which acts as the Nucleophile. Residues R179 to D182, N190, and H220 to Y222 each bind dUMP. A (6R)-5,10-methylene-5,6,7,8-tetrahydrofolate-binding site is contributed by D182. Residue S276 coordinates (6R)-5,10-methylene-5,6,7,8-tetrahydrofolate.

This sequence belongs to the thymidylate synthase family. Bacterial-type ThyA subfamily. Homodimer.

Its subcellular location is the cytoplasm. The catalysed reaction is dUMP + (6R)-5,10-methylene-5,6,7,8-tetrahydrofolate = 7,8-dihydrofolate + dTMP. It functions in the pathway pyrimidine metabolism; dTTP biosynthesis. In terms of biological role, catalyzes the reductive methylation of 2'-deoxyuridine-5'-monophosphate (dUMP) to 2'-deoxythymidine-5'-monophosphate (dTMP) while utilizing 5,10-methylenetetrahydrofolate (mTHF) as the methyl donor and reductant in the reaction, yielding dihydrofolate (DHF) as a by-product. This enzymatic reaction provides an intracellular de novo source of dTMP, an essential precursor for DNA biosynthesis. The polypeptide is Thymidylate synthase (Teredinibacter turnerae (strain ATCC 39867 / T7901)).